The following is a 91-amino-acid chain: Large ribosomal subunit protein bL27 (91 aa).

The interval 1-21 (MAHKKAGGSSRNGRDSESKRL) is disordered.

The protein belongs to the bacterial ribosomal protein bL27 family.

The sequence is that of Large ribosomal subunit protein bL27 from Azoarcus sp. (strain BH72).